Here is an 839-residue protein sequence, read N- to C-terminus: Septin-interacting protein 1 (839 aa).

The segment at isoleucine 22–glutamate 164 is disordered. 2 positions are modified to phosphoserine: serine 43 and serine 47. Threonine 53 carries the phosphothreonine modification. The span at leucine 88–alanine 101 shows a compositional bias: basic and acidic residues. A compositionally biased stretch (acidic residues) spans glutamate 102–aspartate 111. Over residues serine 140 to glutamine 149 the composition is skewed to polar residues. The 47-residue stretch at threonine 167–proline 213 folds into the G-patch domain. Residues isoleucine 363–asparagine 411 are a coiled coil.

This sequence belongs to the TFP11/STIP family. In terms of assembly, identified in the spliceosome C complex. Interacts with pnut.

The protein resides in the nucleus. May be involved in pre-mRNA splicing. This Drosophila melanogaster (Fruit fly) protein is Septin-interacting protein 1 (sip1).